An 876-amino-acid chain; its full sequence is Alanine--tRNA ligase (876 aa).

Zn(2+) contacts are provided by His564, His568, Cys666, and His670.

It belongs to the class-II aminoacyl-tRNA synthetase family. Homotetramer. Zn(2+) serves as cofactor.

Its subcellular location is the cytoplasm. The enzyme catalyses tRNA(Ala) + L-alanine + ATP = L-alanyl-tRNA(Ala) + AMP + diphosphate. Its function is as follows. Catalyzes the attachment of alanine to tRNA(Ala) in a two-step reaction: alanine is first activated by ATP to form Ala-AMP and then transferred to the acceptor end of tRNA(Ala). Also edits incorrectly charged Ser-tRNA(Ala) and Gly-tRNA(Ala) via its editing domain. This Salmonella paratyphi B (strain ATCC BAA-1250 / SPB7) protein is Alanine--tRNA ligase.